Reading from the N-terminus, the 111-residue chain is MICFKQQKITSLFVSLILLLTTILICWFCVLSPKVNGTNSPIEVNVYNPIPLAVMRGGIPLPGMPPVPTATPSLPRSGFTSSAKKIKESRKQKSTALQAVKDQYILRVARL.

Residues 66 to 94 (PVPTATPSLPRSGFTSSAKKIKESRKQKS) form a disordered region. Polar residues predominate over residues 70 to 83 (ATPSLPRSGFTSSA).

It is found in the plastid. Its subcellular location is the chloroplast. This is an uncharacterized protein from Chlamydomonas reinhardtii (Chlamydomonas smithii).